A 268-amino-acid polypeptide reads, in one-letter code: Small ribosomal subunit protein eS1 (268 aa).

Positions 1-21 are disordered; the sequence is MAVGKNKGLSKGGKKGGKKKV.

It belongs to the eukaryotic ribosomal protein eS1 family. Component of the small ribosomal subunit. Mature ribosomes consist of a small (40S) and a large (60S) subunit. The 40S subunit contains about 33 different proteins and 1 molecule of RNA (18S). The 60S subunit contains about 49 different proteins and 3 molecules of RNA (28S, 5.8S and 5S).

It is found in the cytoplasm. Essential for oogenesis; required for late follicle cell development. The chain is Small ribosomal subunit protein eS1 from Drosophila sechellia (Fruit fly).